Here is a 255-residue protein sequence, read N- to C-terminus: Pyridoxine 5'-phosphate synthase (255 aa).

The 3-amino-2-oxopropyl phosphate site is built by N8 and R19. The active-site Proton acceptor is the H44. Residues R46 and H51 each coordinate 1-deoxy-D-xylulose 5-phosphate. E74 (proton acceptor) is an active-site residue. T111 is a 1-deoxy-D-xylulose 5-phosphate binding site. Residue H202 is the Proton donor of the active site. 3-amino-2-oxopropyl phosphate contacts are provided by residues D203 and 225–226 (GH).

Belongs to the PNP synthase family. In terms of assembly, homooctamer; tetramer of dimers.

It localises to the cytoplasm. It carries out the reaction 3-amino-2-oxopropyl phosphate + 1-deoxy-D-xylulose 5-phosphate = pyridoxine 5'-phosphate + phosphate + 2 H2O + H(+). It participates in cofactor biosynthesis; pyridoxine 5'-phosphate biosynthesis; pyridoxine 5'-phosphate from D-erythrose 4-phosphate: step 5/5. In terms of biological role, catalyzes the complicated ring closure reaction between the two acyclic compounds 1-deoxy-D-xylulose-5-phosphate (DXP) and 3-amino-2-oxopropyl phosphate (1-amino-acetone-3-phosphate or AAP) to form pyridoxine 5'-phosphate (PNP) and inorganic phosphate. The sequence is that of Pyridoxine 5'-phosphate synthase from Xanthomonas axonopodis pv. citri (strain 306).